A 282-amino-acid polypeptide reads, in one-letter code: uncharacterized protein (282 aa).

In terms of domain architecture, HTH rpiR-type spans Ser-4–Tyr-80. Residues Val-40 to Arg-59 constitute a DNA-binding region (H-T-H motif). The SIS domain occupies Ile-125–Glu-265.

This is an uncharacterized protein from Providencia stuartii.